Here is a 185-residue protein sequence, read N- to C-terminus: UPF0301 protein HCH_00550 (185 aa).

The protein belongs to the UPF0301 (AlgH) family.

In Hahella chejuensis (strain KCTC 2396), this protein is UPF0301 protein HCH_00550.